A 498-amino-acid chain; its full sequence is Angiopoietin-4 (498 aa).

The signal sequence occupies residues 1-22 (MPSPPAMLLGGLLLIVASTTVA). Positions 51–80 (EPEPCPPEPEAFGGSNSLQRDSPAATLNLG) are disordered. A coiled-coil region spans residues 85–109 (QRMRQLEKMLENNTQWLQKLERYIQ). N96, N126, N158, N247, N295, N306, N332, and N424 each carry an N-linked (GlcNAc...) asparagine glycan. Positions 186–254 (HELHRLQGHN…SSNSSLLQRQ (69 aa)) form a coiled coil. Positions 277-497 (RAADQLFQDC…TTRMMVRPSG (221 aa)) constitute a Fibrinogen C-terminal domain. Residues C286 and C315 are joined by a disulfide bond. A disulfide bridge connects residues C439 and C452.

As to quaternary structure, homodimer; disulfide-linked. Interacts with TEK/TIE2.

It is found in the secreted. In terms of biological role, binds to TEK/TIE2, modulating ANGPT1 signaling. Can induce tyrosine phosphorylation of TEK/TIE2. Promotes endothelial cell survival, migration and angiogenesis. The chain is Angiopoietin-4 (ANGPT4) from Bos taurus (Bovine).